The chain runs to 89 residues: MAKKSKVVKHERQKALVEQYAELRRTLKAEGRYEELRKLPRDSTPSRLHNRCALTGRPHGYMRKFGMSRIRFRELAHQGQLPGVKKASW.

This sequence belongs to the universal ribosomal protein uS14 family. As to quaternary structure, part of the 30S ribosomal subunit. Contacts proteins S3 and S10.

Its function is as follows. Binds 16S rRNA, required for the assembly of 30S particles and may also be responsible for determining the conformation of the 16S rRNA at the A site. The polypeptide is Small ribosomal subunit protein uS14A (Listeria welshimeri serovar 6b (strain ATCC 35897 / DSM 20650 / CCUG 15529 / CIP 8149 / NCTC 11857 / SLCC 5334 / V8)).